We begin with the raw amino-acid sequence, 180 residues long: GTP cyclohydrolase 1 (180 aa).

Zn(2+) is bound by residues cysteine 71, histidine 74, and cysteine 142.

The protein belongs to the GTP cyclohydrolase I family. Homomer.

The catalysed reaction is GTP + H2O = 7,8-dihydroneopterin 3'-triphosphate + formate + H(+). It participates in cofactor biosynthesis; 7,8-dihydroneopterin triphosphate biosynthesis; 7,8-dihydroneopterin triphosphate from GTP: step 1/1. This Helicobacter pylori (strain Shi470) protein is GTP cyclohydrolase 1.